Here is a 404-residue protein sequence, read N- to C-terminus: Rhomboid-related protein 3 (404 aa).

2 consecutive EF-hand domains span residues 34–69 and 70–105; these read APED…HSSK and LDPH…KRSN. The next 7 helical transmembrane spans lie at 164-184, 227-247, 250-270, 274-294, 305-324, 338-358, and 371-391; these read WFMI…GVLL, LGLN…VHGA, IGLV…VADM, VVGS…NIVM, LLRM…RAVW, PSFV…VVVL, and WWIF…WNIF. The active-site Nucleophile is the Ser278. His343 is a catalytic residue.

The protein belongs to the peptidase S54 family.

It is found in the membrane. It catalyses the reaction Cleaves type-1 transmembrane domains using a catalytic dyad composed of serine and histidine that are contributed by different transmembrane domains.. Functionally, may be involved in regulated intramembrane proteolysis and the subsequent release of functional polypeptides from their membrane anchors. This Mus musculus (Mouse) protein is Rhomboid-related protein 3 (Rhbdl3).